A 173-amino-acid polypeptide reads, in one-letter code: Streptothricin acetyltransferase A (173 aa).

Residues 21-173 (VVFGRMIPAF…EIAIFWYYKF (153 aa)) enclose the N-acetyltransferase domain.

The protein belongs to the acetyltransferase family. GNAT subfamily. Homodimer.

The enzyme catalyses streptothricin D + acetyl-CoA = N(beta)-acetylstreptothricin D + CoA + H(+). The catalysed reaction is streptothricin F + acetyl-CoA = N(beta)-acetylstreptothricin F + CoA + H(+). Its function is as follows. Involved in resistance to streptothricin, a broad-spectrum antibiotic produced by streptomycetes. Detoxifies streptothricin via acetylation of the beta amino group of the first beta-lysyl moiety of streptothricin. The polypeptide is Streptothricin acetyltransferase A (Bacillus subtilis (strain 168)).